A 144-amino-acid polypeptide reads, in one-letter code: Large ribosomal subunit protein uL15 (144 aa).

Residues 1–58 (MRLNELAPEPGSRPSAKRVGRGIGSGLGKTGGRGHKGLKSRSGGSVAPGFEGGQQPLA) form a disordered region. A compositionally biased stretch (gly residues) spans 21 to 31 (RGIGSGLGKTG).

The protein belongs to the universal ribosomal protein uL15 family. Part of the 50S ribosomal subunit.

Binds to the 23S rRNA. The polypeptide is Large ribosomal subunit protein uL15 (Marinobacter nauticus (strain ATCC 700491 / DSM 11845 / VT8) (Marinobacter aquaeolei)).